A 251-amino-acid polypeptide reads, in one-letter code: Probable transcriptional regulatory protein PMI1113 (251 aa).

This sequence belongs to the TACO1 family.

The protein localises to the cytoplasm. This chain is Probable transcriptional regulatory protein PMI1113, found in Proteus mirabilis (strain HI4320).